We begin with the raw amino-acid sequence, 148 residues long: Large ribosomal subunit protein uL15 (148 aa).

The span at 1–30 (MPSRLRKTRKLRGHVSHGHGRIGKHRKHPG) shows a compositional bias: basic residues. A disordered region spans residues 1–38 (MPSRLRKTRKLRGHVSHGHGRIGKHRKHPGGRGNAGGL). His39 is modified ((3S)-3-hydroxyhistidine). Lys47 and Lys55 each carry N6-acetyllysine. Residue Ser68 is modified to Phosphoserine. An N6-acetyllysine modification is found at Lys110.

The protein belongs to the universal ribosomal protein uL15 family. In terms of assembly, component of the large ribosomal subunit. In terms of processing, hydroxylated on His-39 by MINA.

The protein localises to the cytoplasm. Functionally, component of the large ribosomal subunit. The ribosome is a large ribonucleoprotein complex responsible for the synthesis of proteins in the cell. This chain is Large ribosomal subunit protein uL15 (RPL27A), found in Homo sapiens (Human).